The primary structure comprises 435 residues: Hyaluronidase-1 (435 aa).

An N-terminal signal peptide occupies residues 1–21; the sequence is MAAHLLPICALFLTLLDMAQG. Intrachain disulfides connect Cys43–Cys333 and Cys207–Cys221. Residue Asn99 is glycosylated (N-linked (GlcNAc...) asparagine). Catalysis depends on Glu131, which acts as the Proton donor. 2 N-linked (GlcNAc...) asparagine glycosylation sites follow: Asn216 and Asn350. The EGF-like domain occupies 354–430; sequence GALLCSQALC…YPGWQAPWCE (77 aa). 3 disulfide bridges follow: Cys358/Cys369, Cys363/Cys418, and Cys420/Cys429.

This sequence belongs to the glycosyl hydrolase 56 family. Highly expressed in the liver, kidney and heart. Weakly expressed in lung, placenta and skeletal muscle. No expression detected in adult brain. Isoform 1 is expressed only in bladder and prostate cancer cells, G2/G3 bladder tumor tissues and lymph node specimens showing tumor invasive tumors cells. Isoform 3, isoform 4, isoform 5 and isoform 6 are expressed in normal bladder and bladder tumor tissues.

The protein localises to the secreted. The protein resides in the lysosome. It carries out the reaction Random hydrolysis of (1-&gt;4)-linkages between N-acetyl-beta-D-glucosamine and D-glucuronate residues in hyaluronate.. Functionally, may have a role in promoting tumor progression. May block the TGFB1-enhanced cell growth. The polypeptide is Hyaluronidase-1 (HYAL1) (Homo sapiens (Human)).